Consider the following 385-residue polypeptide: cAMP-dependent protein kinase regulatory subunit (385 aa).

The segment covering 1–22 (MSSTGFTSPFGNANPFGSSGRS) has biased composition (polar residues). Disordered regions lie at residues 1 to 51 (MSST…GVKN) and 77 to 111 (DFPAHYNLGRRTSVSAESLKPVTDNSDNWSPPVHP). The segment at 1–128 (MSSTGFTSPF…RLKKAISGNF (128 aa)) is dimerization and phosphorylation. S89 carries the phosphoserine modification. 3',5'-cyclic AMP is bound by residues 129-260 (LFNH…EEVP), E207, R216, 261-378 (ILKT…EAEE), E328, and R337.

The protein belongs to the cAMP-dependent kinase regulatory chain family. Tetramer, composed of 2 regulatory (R) and 2 catalytic (C) subunits. In the presence of cAMP it dissociates into 2 active monomeric C subunits and an R dimer.

In Neurospora crassa (strain ATCC 24698 / 74-OR23-1A / CBS 708.71 / DSM 1257 / FGSC 987), this protein is cAMP-dependent protein kinase regulatory subunit (mcb).